A 523-amino-acid chain; its full sequence is UDP-glucuronosyltransferase 3A2 (523 aa).

The signal sequence occupies residues 1 to 22 (MAAHRRWLLMSFLFLEVILLEA). At 23–487 (AKILTISTLS…QPWHEQYMLD (465 aa)) the chain is on the extracellular side. N-linked (GlcNAc...) asparagine glycosylation occurs at Asn52. The helical transmembrane segment at 488–508 (VFLFLLGLMLGTLWLSVKVLV) threads the bilayer. Residues 509 to 523 (AVTRYLSIATKVKEA) lie on the Cytoplasmic side of the membrane.

This sequence belongs to the UDP-glycosyltransferase family. As to expression, highly expressed in kidney, while it is expressed at low levels in liver. Not detected in other tissues examined.

Its subcellular location is the membrane. The enzyme catalyses glucuronate acceptor + UDP-alpha-D-glucuronate = acceptor beta-D-glucuronoside + UDP + H(+). Functionally, UDP-glucuronosyltransferases catalyze phase II biotransformation reactions in which lipophilic substrates are conjugated with glucuronic acid to increase water solubility and enhance excretion. They are of major importance in the conjugation and subsequent elimination of potentially toxic xenobiotics and endogenous compounds. The sequence is that of UDP-glucuronosyltransferase 3A2 (Ugt3a2) from Mus musculus (Mouse).